Here is a 475-residue protein sequence, read N- to C-terminus: Putative aldehyde dehydrogenase (475 aa).

NAD(+) contacts are provided by residues 146-147 (WN) and 223-224 (GS). The active-site Proton acceptor is the Glu245. Residue Leu246 coordinates NAD(+). Cys279 (nucleophile) is an active-site residue. Glu379 provides a ligand contact to NAD(+).

It belongs to the aldehyde dehydrogenase family.

The enzyme catalyses an aldehyde + NAD(+) + H2O = a carboxylate + NADH + 2 H(+). This chain is Putative aldehyde dehydrogenase, found in Staphylococcus aureus (strain bovine RF122 / ET3-1).